A 212-amino-acid polypeptide reads, in one-letter code: Fucoxanthin-chlorophyll a-c binding protein E, chloroplastic (212 aa).

The transit peptide at methionine 1 to methionine 34 directs the protein to the chloroplast. 3 consecutive transmembrane segments (helical) span residues isoleucine 76–leucine 96, isoleucine 117–valine 137, and glycine 178–proline 198.

Belongs to the fucoxanthin chlorophyll protein family. In terms of assembly, the LHC complex of chromophytic algae is composed of fucoxanthin, chlorophyll A and C bound non-covalently by fucoxanthin chlorophyll proteins (FCPs). The ratio of pigments in this LHC is; fucoxanthin: chlorophyll C: chlorophyll A; (0.6-1): (0.1-0.3): (1).

The protein resides in the plastid. Its subcellular location is the chloroplast thylakoid membrane. The light-harvesting complex (LHC) functions as a light receptor, it captures and delivers excitation energy to photosystems with which it is closely associated. Energy is transferred from the carotenoid and chlorophyll C (or B) to chlorophyll A and the photosynthetic reaction centers where it is used to synthesize ATP and reducing power. This Macrocystis pyrifera (Giant kelp) protein is Fucoxanthin-chlorophyll a-c binding protein E, chloroplastic (FCPE).